A 215-amino-acid chain; its full sequence is Protein N-lysine methyltransferase METTL21A (215 aa).

S-adenosyl-L-methionine-binding positions include Trp-47, 73 to 75 (GAG), Asp-94, Trp-125, and Ala-141.

This sequence belongs to the methyltransferase superfamily. METTL21 family.

It is found in the cytoplasm. The catalysed reaction is L-lysyl-[protein] + 3 S-adenosyl-L-methionine = N(6),N(6),N(6)-trimethyl-L-lysyl-[protein] + 3 S-adenosyl-L-homocysteine + 3 H(+). Protein-lysine methyltransferase that selectively trimethylates residues in heat shock protein 70 (HSP70) family members. The sequence is that of Protein N-lysine methyltransferase METTL21A (mettl21a) from Xenopus tropicalis (Western clawed frog).